A 376-amino-acid polypeptide reads, in one-letter code: Protein RecA (376 aa).

65–72 (GPESSGKT) lines the ATP pocket. The segment at 316-376 (EHDEIFTSVR…GDDLSDDDIY (61 aa)) is disordered. Over residues 331–350 (GEKKDSDEDPGDNKKSKDSA) the composition is skewed to basic and acidic residues. The segment covering 366–376 (PGDDLSDDDIY) has biased composition (acidic residues).

This sequence belongs to the RecA family.

The protein resides in the cytoplasm. Can catalyze the hydrolysis of ATP in the presence of single-stranded DNA, the ATP-dependent uptake of single-stranded DNA by duplex DNA, and the ATP-dependent hybridization of homologous single-stranded DNAs. It interacts with LexA causing its activation and leading to its autocatalytic cleavage. In Oenococcus oeni (strain ATCC BAA-331 / PSU-1), this protein is Protein RecA.